Consider the following 345-residue polypeptide: 4-hydroxyproline 2-epimerase 1 (345 aa).

Gln-85 contacts substrate. The active-site Proton acceptor is the Ser-93. Residues 94–95 and Asp-251 contribute to the substrate site; that span reads GS. Catalysis depends on Cys-255, which acts as the Proton donor. Residue 256–257 coordinates substrate; sequence GT.

The protein belongs to the proline racemase family.

It carries out the reaction trans-4-hydroxy-L-proline = cis-4-hydroxy-D-proline. Functionally, catalyzes the epimerization of trans-4-hydroxy-L-proline (t4LHyp) to cis-4-hydroxy-D-proline (c4DHyp). May be involved in a degradation pathway of t4LHyp. Can also catalyze the epimerization of trans-3-hydroxy-L-proline (t3LHyp) to cis-3-hydroxy-D-proline (c3DHyp) in vitro. Displays no proline racemase activity. The polypeptide is 4-hydroxyproline 2-epimerase 1 (Rhizobium rhizogenes (strain K84 / ATCC BAA-868) (Agrobacterium radiobacter)).